The chain runs to 149 residues: Large ribosomal subunit protein bL9 (149 aa).

It belongs to the bacterial ribosomal protein bL9 family.

In terms of biological role, binds to the 23S rRNA. The sequence is that of Large ribosomal subunit protein bL9 from Pasteurella multocida (strain Pm70).